We begin with the raw amino-acid sequence, 350 residues long: Type II restriction enzyme NgoBI (350 aa).

The catalysed reaction is Endonucleolytic cleavage of DNA to give specific double-stranded fragments with terminal 5'-phosphates.. Functionally, a P subtype restriction enzyme that recognizes the double-stranded sequence 5'-RGCGCY-3'; the cleavage site is unknown. This chain is Type II restriction enzyme NgoBI (ngoBIR), found in Neisseria gonorrhoeae.